Reading from the N-terminus, the 488-residue chain is Bifunctional protein HldE (488 aa).

The segment at methionine 1–alanine 332 is ribokinase. Asparagine 208 to glutamate 211 contacts ATP. Aspartate 277 is an active-site residue. The cytidylyltransferase stretch occupies residues phenylalanine 359–serine 488.

This sequence in the N-terminal section; belongs to the carbohydrate kinase PfkB family. In the C-terminal section; belongs to the cytidylyltransferase family. In terms of assembly, homodimer.

It catalyses the reaction D-glycero-beta-D-manno-heptose 7-phosphate + ATP = D-glycero-beta-D-manno-heptose 1,7-bisphosphate + ADP + H(+). The enzyme catalyses D-glycero-beta-D-manno-heptose 1-phosphate + ATP + H(+) = ADP-D-glycero-beta-D-manno-heptose + diphosphate. Its pathway is nucleotide-sugar biosynthesis; ADP-L-glycero-beta-D-manno-heptose biosynthesis; ADP-L-glycero-beta-D-manno-heptose from D-glycero-beta-D-manno-heptose 7-phosphate: step 1/4. The protein operates within nucleotide-sugar biosynthesis; ADP-L-glycero-beta-D-manno-heptose biosynthesis; ADP-L-glycero-beta-D-manno-heptose from D-glycero-beta-D-manno-heptose 7-phosphate: step 3/4. In terms of biological role, catalyzes the phosphorylation of D-glycero-D-manno-heptose 7-phosphate at the C-1 position to selectively form D-glycero-beta-D-manno-heptose-1,7-bisphosphate. Catalyzes the ADP transfer from ATP to D-glycero-beta-D-manno-heptose 1-phosphate, yielding ADP-D-glycero-beta-D-manno-heptose. In Methylobacillus flagellatus (strain ATCC 51484 / DSM 6875 / VKM B-1610 / KT), this protein is Bifunctional protein HldE.